The sequence spans 145 residues: Large ribosomal subunit protein bL17 (145 aa).

The interval 123–145 is disordered; that stretch reads KRVDRKKKDPAKDKTEEKKLATA.

It belongs to the bacterial ribosomal protein bL17 family. Part of the 50S ribosomal subunit. Contacts protein L32.

This chain is Large ribosomal subunit protein bL17, found in Pelagibacter ubique (strain HTCC1062).